Consider the following 179-residue polypeptide: Lebocin-1/2 (179 aa).

The N-terminal stretch at 1–16 is a signal peptide; sequence MYKFLVFSSVLVLFFA. Residues 17–120 constitute a propeptide that is removed on maturation; that stretch reads QASCQRFIQP…QPIESHRNTR (104 aa). Positions 93–116 are disordered; it reads NNEASIEHSHHTVDTGLDQPIESH. A glycan (O-linked (GalNAc...) threonine) is linked at Thr135. Residues 153-179 constitute a propeptide that is removed on maturation; sequence RRHASDDQEELRQYNEHFLIPRDIFQE.

This sequence belongs to the lebocin family. In terms of processing, O-glycosylation is important for the antibacterial activity of lebocin, O-linked glycan structure is a disaccharide (Gal-GalNAc) in case of lebocin 1 and a monosaccharide (GalNAc) in case of lebocin 2. In terms of tissue distribution, hemolymph. Produced in fat body.

The protein localises to the secreted. Functionally, antibacterial peptide. The chain is Lebocin-1/2 from Bombyx mori (Silk moth).